Consider the following 266-residue polypeptide: tRNA pseudouridine synthase A (266 aa).

Asp57 serves as the catalytic Nucleophile. A substrate-binding site is contributed by Tyr115.

The protein belongs to the tRNA pseudouridine synthase TruA family. In terms of assembly, homodimer.

The enzyme catalyses uridine(38/39/40) in tRNA = pseudouridine(38/39/40) in tRNA. In terms of biological role, formation of pseudouridine at positions 38, 39 and 40 in the anticodon stem and loop of transfer RNAs. In Buchnera aphidicola subsp. Acyrthosiphon pisum (strain Tuc7), this protein is tRNA pseudouridine synthase A.